The sequence spans 655 residues: ATP-dependent zinc metalloprotease FtsH (655 aa).

The Cytoplasmic segment spans residues 1–17 (MPIETEPNRTRKNFEPK). Residues 18–38 (RFGGSLFILFTLLLFLNLFVL) form a helical membrane-spanning segment. At 39–124 (RGPRFPITAY…APPPSSLSWL (86 aa)) the chain is on the lumenal side. A helical transmembrane segment spans residues 125–145 (PTLLGWVVPPLIFFGIWSWLI). The Cytoplasmic segment spans residues 146-655 (NRNQGAGPAA…LNSHQLIGIN (510 aa)). An ATP-binding site is contributed by 216–223 (GPPGTGKT). Position 440 (His440) interacts with Zn(2+). The active site involves Glu441. Zn(2+)-binding residues include His444 and Asp517.

In the central section; belongs to the AAA ATPase family. The protein in the C-terminal section; belongs to the peptidase M41 family. As to quaternary structure, homohexamer. Zn(2+) serves as cofactor.

The protein localises to the cellular thylakoid membrane. Acts as a processive, ATP-dependent zinc metallopeptidase for both cytoplasmic and membrane proteins. Plays a role in the quality control of integral membrane proteins. This is ATP-dependent zinc metalloprotease FtsH from Acaryochloris marina (strain MBIC 11017).